The following is a 313-amino-acid chain: Metaxin-3 (313 aa).

Residues 280-313 (EKMDDNLRSSPQHRPHRHEAKPSAPASDRNSTPA) are disordered.

The protein belongs to the metaxin family. Part of a large protein complex spanning both mitochondrial membranes termed the mitochondrial intermembrane space bridging (MIB) complex.

The protein resides in the mitochondrion. It is found in the mitochondrion outer membrane. Functionally, could function in transport of proteins into the mitochondrion. The polypeptide is Metaxin-3 (mtx3) (Danio rerio (Zebrafish)).